The following is a 145-amino-acid chain: Bacilliredoxin SH1401 (145 aa).

The protein belongs to the bacilliredoxin family.

The chain is Bacilliredoxin SH1401 from Staphylococcus haemolyticus (strain JCSC1435).